Consider the following 386-residue polypeptide: 1-deoxy-D-xylulose 5-phosphate reductoisomerase (386 aa).

NADPH-binding residues include Thr-7, Gly-8, Ser-9, Ile-10, Ala-33, and Asn-124. Lys-125 provides a ligand contact to 1-deoxy-D-xylulose 5-phosphate. Glu-126 contributes to the NADPH binding site. Asp-148 contributes to the Mn(2+) binding site. 1-deoxy-D-xylulose 5-phosphate-binding residues include Ser-149, Glu-150, Ser-174, and His-197. Glu-150 serves as a coordination point for Mn(2+). Gly-203 contributes to the NADPH binding site. 1-deoxy-D-xylulose 5-phosphate is bound by residues Ser-210, Asn-215, Lys-216, and Glu-219. Glu-219 contacts Mn(2+).

Belongs to the DXR family. Mg(2+) is required as a cofactor. The cofactor is Mn(2+).

The catalysed reaction is 2-C-methyl-D-erythritol 4-phosphate + NADP(+) = 1-deoxy-D-xylulose 5-phosphate + NADPH + H(+). The protein operates within isoprenoid biosynthesis; isopentenyl diphosphate biosynthesis via DXP pathway; isopentenyl diphosphate from 1-deoxy-D-xylulose 5-phosphate: step 1/6. Functionally, catalyzes the NADPH-dependent rearrangement and reduction of 1-deoxy-D-xylulose-5-phosphate (DXP) to 2-C-methyl-D-erythritol 4-phosphate (MEP). The polypeptide is 1-deoxy-D-xylulose 5-phosphate reductoisomerase (Kitasatospora griseola (Streptomyces griseolosporeus)).